Here is a 125-residue protein sequence, read N- to C-terminus: Holo-[acyl-carrier-protein] synthase (125 aa).

Mg(2+)-binding residues include aspartate 8 and glutamate 57.

This sequence belongs to the P-Pant transferase superfamily. AcpS family. The cofactor is Mg(2+).

Its subcellular location is the cytoplasm. The enzyme catalyses apo-[ACP] + CoA = holo-[ACP] + adenosine 3',5'-bisphosphate + H(+). Functionally, transfers the 4'-phosphopantetheine moiety from coenzyme A to a Ser of acyl-carrier-protein. This is Holo-[acyl-carrier-protein] synthase from Azoarcus sp. (strain BH72).